The primary structure comprises 388 residues: Succinate--CoA ligase [ADP-forming] subunit beta (388 aa).

One can recognise an ATP-grasp domain in the interval 9-244; it reads KQLFAEYGLP…PSQDDPREAH (236 aa). Residues Lys-46, 53–55, Glu-99, Thr-102, and Glu-107 each bind ATP; that span reads GRG. Asn-199 and Asp-213 together coordinate Mg(2+). Substrate is bound by residues Asn-264 and 321 to 323; that span reads GIV.

It belongs to the succinate/malate CoA ligase beta subunit family. In terms of assembly, heterotetramer of two alpha and two beta subunits. It depends on Mg(2+) as a cofactor.

It catalyses the reaction succinate + ATP + CoA = succinyl-CoA + ADP + phosphate. It carries out the reaction GTP + succinate + CoA = succinyl-CoA + GDP + phosphate. It participates in carbohydrate metabolism; tricarboxylic acid cycle; succinate from succinyl-CoA (ligase route): step 1/1. Its function is as follows. Succinyl-CoA synthetase functions in the citric acid cycle (TCA), coupling the hydrolysis of succinyl-CoA to the synthesis of either ATP or GTP and thus represents the only step of substrate-level phosphorylation in the TCA. The beta subunit provides nucleotide specificity of the enzyme and binds the substrate succinate, while the binding sites for coenzyme A and phosphate are found in the alpha subunit. The polypeptide is Succinate--CoA ligase [ADP-forming] subunit beta (Pseudomonas fluorescens (strain Pf0-1)).